We begin with the raw amino-acid sequence, 274 residues long: Large ribosomal subunit protein uL2 (274 aa).

Disordered regions lie at residues 28 to 55 (APHA…RHVG) and 224 to 274 (VAMN…RRRK).

The protein belongs to the universal ribosomal protein uL2 family. In terms of assembly, part of the 50S ribosomal subunit. Forms a bridge to the 30S subunit in the 70S ribosome.

Functionally, one of the primary rRNA binding proteins. Required for association of the 30S and 50S subunits to form the 70S ribosome, for tRNA binding and peptide bond formation. It has been suggested to have peptidyltransferase activity; this is somewhat controversial. Makes several contacts with the 16S rRNA in the 70S ribosome. This chain is Large ribosomal subunit protein uL2, found in Pseudomonas putida (strain ATCC 47054 / DSM 6125 / CFBP 8728 / NCIMB 11950 / KT2440).